The sequence spans 59 residues: Small, acid-soluble spore protein H 2 (59 aa).

The protein belongs to the SspH family.

Its subcellular location is the spore core. This chain is Small, acid-soluble spore protein H 2 (sspH2), found in Bacillus anthracis.